The following is an 82-amino-acid chain: Alpha-defensin 17 (82 aa).

Positions 1 to 8 (LLAFQVQA) are cleaved as a signal peptide. Residues 1–43 (LLAFQVQADPIQNTDEETKTEEQPGEEDQAVSVSFGDPEGTSL) form a disordered region. Positions 9 to 47 (DPIQNTDEETKTEEQPGEEDQAVSVSFGDPEGTSLQEES) are excised as a propeptide. Cystine bridges form between Cys53/Cys81, Cys55/Cys70, and Cys60/Cys80.

It belongs to the alpha-defensin family.

The protein resides in the secreted. Functionally, probably contributes to the antimicrobial barrier function of the small bowel mucosa. The protein is Alpha-defensin 17 (Defa17) of Mus musculus (Mouse).